A 179-amino-acid chain; its full sequence is Ribosome maturation factor RimM (179 aa).

In terms of domain architecture, PRC barrel spans 100 to 176 (KEEFHLLELI…FIIINPPNGL (77 aa)).

The protein belongs to the RimM family. In terms of assembly, binds ribosomal protein uS19.

It is found in the cytoplasm. In terms of biological role, an accessory protein needed during the final step in the assembly of 30S ribosomal subunit, possibly for assembly of the head region. Essential for efficient processing of 16S rRNA. May be needed both before and after RbfA during the maturation of 16S rRNA. It has affinity for free ribosomal 30S subunits but not for 70S ribosomes. The protein is Ribosome maturation factor RimM of Prochlorococcus marinus (strain MIT 9215).